Reading from the N-terminus, the 488-residue chain is MTELAAVSFVYPDLDALAAETAKIAVLVPAEGTLNPGARRLNRLTKGAVARAVESAAFEKLKSGESLSLGYPAGMASDEVILVKLARNAKPLEARKAGAGLGKTLGKEGLLIWAAGLGQVAELAFGAALRAYRFDARKSKSEDALGPITVCATKRDEAEAAFADRRAVAEGVFFTRDLVNEPANVLTTTEFADRLTAMADLGLEVSVLEEADMEKLGMGALLGVGQGSESPSKIVVMKWMGGGDGAPFALVGKGVVFDTGGISIKPSAGMEDMTMDMGGAGVVAGVMRTLALRKAKANVVGLVGLVENMPDGKAQRPGDVVTSMKGDTIEVINTDAEGRLVLADVMWYAQEEFKPCAMIDLATLTGAIIIGLGHENAGVFSNSDDLSGAFLKAATAEGEGAWRMPMGPAYDKLIKSRVADIKNVGGRAAGSITAAQFLGRFVKDETPWCHLDIAGTASVSSATDYAPAGATGWGVRALDRLIRDGYEG.

Mn(2+)-binding residues include Lys-253 and Asp-258. Lys-265 is a catalytic residue. Asp-276, Asp-335, and Glu-337 together coordinate Mn(2+). Arg-339 is an active-site residue.

The protein belongs to the peptidase M17 family. Mn(2+) serves as cofactor.

It localises to the cytoplasm. It catalyses the reaction Release of an N-terminal amino acid, Xaa-|-Yaa-, in which Xaa is preferably Leu, but may be other amino acids including Pro although not Arg or Lys, and Yaa may be Pro. Amino acid amides and methyl esters are also readily hydrolyzed, but rates on arylamides are exceedingly low.. The catalysed reaction is Release of an N-terminal amino acid, preferentially leucine, but not glutamic or aspartic acids.. Presumably involved in the processing and regular turnover of intracellular proteins. Catalyzes the removal of unsubstituted N-terminal amino acids from various peptides. In Dinoroseobacter shibae (strain DSM 16493 / NCIMB 14021 / DFL 12), this protein is Probable cytosol aminopeptidase.